Consider the following 217-residue polypeptide: Thiopurine S-methyltransferase (217 aa).

S-adenosyl-L-methionine-binding residues include W10, L45, E66, and R123.

It belongs to the class I-like SAM-binding methyltransferase superfamily. TPMT family.

It localises to the cytoplasm. It catalyses the reaction S-adenosyl-L-methionine + a thiopurine = S-adenosyl-L-homocysteine + a thiopurine S-methylether.. This is Thiopurine S-methyltransferase from Pseudomonas fluorescens (strain Pf0-1).